A 539-amino-acid chain; its full sequence is Chaperonin GroEL (539 aa).

Residues 29-32 (TIGP), 86-90 (DGTTT), Gly-413, 476-478 (NAA), and Asp-492 each bind ATP.

This sequence belongs to the chaperonin (HSP60) family. In terms of assembly, forms a cylinder of 14 subunits composed of two heptameric rings stacked back-to-back. Interacts with the co-chaperonin GroES.

Its subcellular location is the cytoplasm. It carries out the reaction ATP + H2O + a folded polypeptide = ADP + phosphate + an unfolded polypeptide.. In terms of biological role, together with its co-chaperonin GroES, plays an essential role in assisting protein folding. The GroEL-GroES system forms a nano-cage that allows encapsulation of the non-native substrate proteins and provides a physical environment optimized to promote and accelerate protein folding. This Leuconostoc mesenteroides subsp. mesenteroides (strain ATCC 8293 / DSM 20343 / BCRC 11652 / CCM 1803 / JCM 6124 / NCDO 523 / NBRC 100496 / NCIMB 8023 / NCTC 12954 / NRRL B-1118 / 37Y) protein is Chaperonin GroEL.